The chain runs to 183 residues: Adenine phosphoribosyltransferase (183 aa).

Belongs to the purine/pyrimidine phosphoribosyltransferase family. As to quaternary structure, homodimer.

Its subcellular location is the cytoplasm. It catalyses the reaction AMP + diphosphate = 5-phospho-alpha-D-ribose 1-diphosphate + adenine. The protein operates within purine metabolism; AMP biosynthesis via salvage pathway; AMP from adenine: step 1/1. Functionally, catalyzes a salvage reaction resulting in the formation of AMP, that is energically less costly than de novo synthesis. The polypeptide is Adenine phosphoribosyltransferase (Salmonella heidelberg (strain SL476)).